The following is an 802-amino-acid chain: Aldehyde dehydrogenase family 16 member A1 (802 aa).

Belongs to the aldehyde dehydrogenase family. In terms of assembly, interacts with SPG21.

The sequence is that of Aldehyde dehydrogenase family 16 member A1 (Aldh16a1) from Mus musculus (Mouse).